The following is a 449-amino-acid chain: Sensor protein QseC (449 aa).

The Cytoplasmic portion of the chain corresponds to 1–12; sequence MKFTQRLSLRVR. The helical transmembrane segment at 13-33 threads the bilayer; the sequence is LTLIFLILASVTWLLSSFVAW. The Periplasmic portion of the chain corresponds to 34–156; the sequence is KQTTDNVDEL…QEWEYREDMA (123 aa). Residues 157–177 traverse the membrane as a helical segment; it reads LAIVAGQLIPWLVALPVMLII. Residues 178-449 are Cytoplasmic-facing; the sequence is MMVLLGRELA…QGGFEAKVSW (272 aa). The 207-residue stretch at 243-449 folds into the Histidine kinase domain; the sequence is DAAHELRSPL…QGGFEAKVSW (207 aa). Phosphohistidine; by autocatalysis is present on histidine 246.

It localises to the cell inner membrane. The enzyme catalyses ATP + protein L-histidine = ADP + protein N-phospho-L-histidine.. In terms of biological role, member of a two-component regulatory system QseB/QseC. Activates the flagella regulon by activating transcription of FlhDC. May activate QseB by phosphorylation. This chain is Sensor protein QseC (qseC), found in Escherichia coli O157:H7.